The following is a 247-amino-acid chain: uncharacterized protein (247 aa).

It to M.pneumoniae MPN_635 N-terminal region.

This is an uncharacterized protein from Mycoplasma pneumoniae (strain ATCC 29342 / M129 / Subtype 1) (Mycoplasmoides pneumoniae).